Reading from the N-terminus, the 252-residue chain is MINFSNTLIILNNDVPCELLKKKYSELLIPTIGILDFKKKKIYKKYNNIFLYSYQNYSFLLDLNDNILLKIQKYLNKNGILDINLYLNDKSNNNSGTSKKDHSKIEDINKILKRLRKECLYNGYINISAEQTMSENGIVINIKAENPDFNKSDDDNNLVSSDEEIYEKCEDKKKVVNRVCDNCTCGKKEKAMNLEKIKINDNEVEYNTENVVSSCGNCYLGDAFRCGSCPYKGLPAFQPGENVKLNLNNEQN.

Residues 1-153 form an N-terminal SAM-like domain region; it reads MINFSNTLII…AENPDFNKSD (153 aa). The tract at residues 153–166 is linker; the sequence is DDDNNLVSSDEEIY. Residues Cys169, Cys180, Cys183, and Cys185 each contribute to the [2Fe-2S] cluster site. The interval 169–185 is fe-S binding site A; sequence CEDKKKVVNRVCDNCTC. 4 residues coordinate [4Fe-4S] cluster: Cys215, Cys218, Cys226, and Cys229. 2 short sequence motifs (cx2C motif) span residues 215–218 and 226–229; these read CGNC and CGSC. Residues 215–229 are fe-S binding site B; the sequence is CGNCYLGDAFRCGSC.

The protein belongs to the anamorsin family. In terms of assembly, monomer. The cofactor is [2Fe-2S] cluster. [4Fe-4S] cluster serves as cofactor.

It is found in the cytoplasm. It localises to the mitochondrion intermembrane space. Component of the cytosolic iron-sulfur (Fe-S) protein assembly (CIA) machinery. Required for the maturation of extramitochondrial Fe-S proteins. Part of an electron transfer chain functioning in an early step of cytosolic Fe-S biogenesis, facilitating the de novo assembly of a [4Fe-4S] cluster on the cytosolic Fe-S scaffold complex. Electrons are transferred from NADPH via a FAD- and FMN-containing diflavin oxidoreductase. Together with the diflavin oxidoreductase, also required for the assembly of the diferric tyrosyl radical cofactor of ribonucleotide reductase (RNR), probably by providing electrons for reduction during radical cofactor maturation in the catalytic small subunit. This chain is Anamorsin homolog (DRE2), found in Plasmodium berghei (strain Anka).